Reading from the N-terminus, the 875-residue chain is Neurotrypsin (875 aa).

The first 20 residues, 1-20, serve as a signal peptide directing secretion; the sequence is MTLARFVLALVLGALPEVVG. An N-linked (GlcNAc...) asparagine glycan is attached at N26. The interval 29–68 is disordered; it reads LHHRHRHSPPPGPQYPYYLPTHQRPPRTRPPPPLPRFSRP. The Kringle domain maps to 93 to 165; that stretch reads CPPGEPWVSV…GKVDWGYCDC (73 aa). Disulfide bonds link C93/C165, C109/C149, C138/C163, C195/C259, C208/C269, C239/C249, C305/C369, C318/C379, C349/C359, C412/C475, C425/C485, C455/C465, C525/C589, C538/C599, C569/C579, C619/C750, C661/C677, C765/C831, C794/C808, and C821/C850. 4 consecutive SRCR domains span residues 170–271, 280–381, 387–487, and 500–601; these read VRLR…TCSF, IRLV…SCTP, IRLA…ACYP, and VRLM…ICDY. Positions 619–630 are zymogen activation region; that stretch reads CGLRLLHRRQKR. One can recognise a Peptidase S1 domain in the interval 631–874; it reads IIGGKNSLRG…FVPWIKSVTK (244 aa). H676 (charge relay system) is an active-site residue. N-linked (GlcNAc...) asparagine glycosylation occurs at N683. Catalysis depends on D726, which acts as the Charge relay system. S825 acts as the Charge relay system in catalysis.

The protein belongs to the peptidase S1 family.

It is found in the secreted. Functionally, plays a role in neuronal plasticity and the proteolytic action may subserve structural reorganizations associated with learning and memory operations. This chain is Neurotrypsin (PRSS12), found in Trachypithecus phayrei (Phayre's leaf monkey).